The following is a 249-amino-acid chain: DNA repair protein RecO (249 aa).

This sequence belongs to the RecO family.

Functionally, involved in DNA repair and RecF pathway recombination. This is DNA repair protein RecO from Leptospira biflexa serovar Patoc (strain Patoc 1 / Ames).